We begin with the raw amino-acid sequence, 202 residues long: Transmembrane 4 L6 family member 1 (202 aa).

The Cytoplasmic segment spans residues 1–9 (MCYGKCARC). Residues 10 to 30 (IGHSLVGLALLCIAANILLYF) form a helical membrane-spanning segment. Over 31–49 (PNGETKYASENHLSRFVWF) the chain is Extracellular. Residues 50 to 70 (FSGIVGGGLLMLLPAFVFIGL) form a helical membrane-spanning segment. Residues 71–93 (EQDDCCGCCGHENCGKRCAMLSS) are Cytoplasmic-facing. The chain crosses the membrane as a helical span at residues 94–114 (VLAALIGIAGSGYCVIVAALG). The Extracellular segment spans residues 115-161 (LAEGPLCLDSLGQWNYTFASTEGQYLLDTSTWSECTEPKHIVEWNVS). N-linked (GlcNAc...) asparagine glycosylation is found at Asn129 and Asn159. The helical transmembrane segment at 162–182 (LFSILLALGGIEFILCLIQVI) threads the bilayer. Topologically, residues 183–202 (NGVLGGICGFCCSHQQQYDC) are cytoplasmic.

It belongs to the L6 tetraspanin family. Present in high molecular weight complexes in tumor cells. Interacts with SDCBP2. In terms of tissue distribution, highly expressed in lung, breast, colon and ovarian carcinomas. It is also present on some normal cells, endothelial cells in particular.

It is found in the membrane. The chain is Transmembrane 4 L6 family member 1 (TM4SF1) from Homo sapiens (Human).